A 254-amino-acid polypeptide reads, in one-letter code: 3-deoxy-manno-octulosonate cytidylyltransferase (254 aa).

This sequence belongs to the KdsB family.

Its subcellular location is the cytoplasm. The enzyme catalyses 3-deoxy-alpha-D-manno-oct-2-ulosonate + CTP = CMP-3-deoxy-beta-D-manno-octulosonate + diphosphate. It functions in the pathway nucleotide-sugar biosynthesis; CMP-3-deoxy-D-manno-octulosonate biosynthesis; CMP-3-deoxy-D-manno-octulosonate from 3-deoxy-D-manno-octulosonate and CTP: step 1/1. The protein operates within bacterial outer membrane biogenesis; lipopolysaccharide biosynthesis. In terms of biological role, activates KDO (a required 8-carbon sugar) for incorporation into bacterial lipopolysaccharide in Gram-negative bacteria. This is 3-deoxy-manno-octulosonate cytidylyltransferase from Bordetella pertussis (strain Tohama I / ATCC BAA-589 / NCTC 13251).